The chain runs to 244 residues: EEF1A lysine methyltransferase 2 (244 aa).

The tract at residues 1–27 (MNADAEGHSGAVVPAQSPEGSSAADDF) is disordered. The residue at position 21 (S21) is a Phosphoserine.

The protein belongs to the class I-like SAM-binding methyltransferase superfamily. EFM4 family.

The protein localises to the cytoplasm. It is found in the nucleus. The catalysed reaction is L-lysyl-[protein] + 3 S-adenosyl-L-methionine = N(6),N(6),N(6)-trimethyl-L-lysyl-[protein] + 3 S-adenosyl-L-homocysteine + 3 H(+). Functionally, protein-lysine methyltransferase that selectively catalyzes the trimethylation of EEF1A at 'Lys-318'. This chain is EEF1A lysine methyltransferase 2, found in Mus musculus (Mouse).